The chain runs to 418 residues: Tyrosine--tRNA ligase (418 aa).

Y34 contributes to the L-tyrosine binding site. Positions 39–48 match the 'HIGH' region motif; it reads PTGDSMHIGH. 2 residues coordinate L-tyrosine: Y166 and Q170. A 'KMSKS' region motif is present at residues 228–232; sequence KFGKT. ATP is bound at residue K231. Residues 350 to 418 enclose the S4 RNA-binding domain; it reads QNIVLWLVDA…KKRYFLAHVK (69 aa).

Belongs to the class-I aminoacyl-tRNA synthetase family. TyrS type 1 subfamily. As to quaternary structure, homodimer.

The protein resides in the cytoplasm. It carries out the reaction tRNA(Tyr) + L-tyrosine + ATP = L-tyrosyl-tRNA(Tyr) + AMP + diphosphate + H(+). Catalyzes the attachment of tyrosine to tRNA(Tyr) in a two-step reaction: tyrosine is first activated by ATP to form Tyr-AMP and then transferred to the acceptor end of tRNA(Tyr). In Lactiplantibacillus plantarum (strain ATCC BAA-793 / NCIMB 8826 / WCFS1) (Lactobacillus plantarum), this protein is Tyrosine--tRNA ligase.